The chain runs to 701 residues: ABC transporter G family member 23 (701 aa).

The region spanning 7–237 (INLNNVSRSY…YECSLLEDVY (231 aa)) is the ABC transporter domain. 39–46 (GSSGSGKT) is a binding site for ATP. 6 helical membrane passes run 335 to 355 (FPLV…FLAI), 493 to 513 (FLAP…FLSI), 541 to 561 (HILA…LIAV), 574 to 596 (LIYL…ISLI), 608 to 628 (LAIF…EAII), and 665 to 685 (LIII…STPI). Residues 459-686 (FQKAFNKIAN…SLIVISTPIG (228 aa)) enclose the ABC transmembrane type-2 domain.

The protein belongs to the ABC transporter superfamily. ABCG family.

Its subcellular location is the membrane. The protein is ABC transporter G family member 23 (abcG23) of Dictyostelium discoideum (Social amoeba).